The following is a 468-amino-acid chain: FAD-linked oxidoreductase azaG (468 aa).

A signal peptide spans 1–16 (MQLSGILSWLLSWLWA). An N-linked (GlcNAc...) asparagine glycan is attached at Asn-44. The 175-residue stretch at 54–228 (TVHGAPHYLG…TSATYRTHQA (175 aa)) folds into the FAD-binding PCMH-type domain. 3 N-linked (GlcNAc...) asparagine glycosylation sites follow: Asn-272, Asn-348, and Asn-464.

It belongs to the oxygen-dependent FAD-linked oxidoreductase family. FAD serves as cofactor.

Its pathway is secondary metabolite biosynthesis. Its function is as follows. FAD-linked oxidoreductase; part of the gene cluster that mediates the biosynthesis of azaphilones, a class of fungal metabolites characterized by a highly oxygenated pyrano-quinone bicyclic core and exhibiting a broad range of bioactivities. In the first step, the non-reducing polyketide synthase azaA forms the hexaketide precursor from successive condensations of five malonyl-CoA units, presumably with a simple acetyl-CoA starter unit. The reactive polyketide chain then undergoes a PT-mediated C2-C7 cyclization to afford the aromatic ring and is eventually released as an aldehyde through the R-domain. The putative ketoreductase azaE is proposed to catalyze the reduction of the terminal ketone resulting in the early culture product FK17-P2a. The monooxygenase azaH was demonstrated to be the only enzyme required to convert FK17-P2a to azanigerone E. AzaH first hydroxylates the benzaldehyde intermediate FK17-P2a at C4, which triggers the formation of the pyran-ring to afford azanigerone E. In parallel, the 2,4-dimethylhexanoyl chain is synthesized by the HR-PKS azaB and is proposed to be transferred to the C4-hydroxyl of azanigerone E by the acyltransferase azaD directly from the ACP domain of azaB. Alternatively, the 2,4-dimethyl-hexanoyl chain may be offloaded from the HR-PKS as a carboxylic acid and converted to an acyl-CoA by azaF. The resulting acyl-CoA molecule could then be taken up as a substrate by AzaD to form azanigerone B. To yield the carboxylic acid substituent in azanigerone A, the hydroxypropyl side chain of azanigerone B would need to undergo a C-C oxidative cleavage catalyzed by cytochrome P450 AzaI. AzaI is proposed to act on a vicinal diol that leads to a C-C bond scission either through an alkoxyradical intermediate or a peroxy complex. In the biosynthesis of azanigerone A, azanigerone B first undergoes hydroxylation at C10, possibly catalyzed by one of the two FAD-dependent monooxygenases encoded in the cluster, azaG or azaL, resulting in the vicinal diol azanigerone C. Oxidative cleavage of azanigerone C by azaI would yield the corresponding aldehyde derivative of azanigerone A. Finally, the dehydrogenase azaJ is proposed to convert the aldehyde functional group into the carboxylic acid, completing the conversion from azanigerone B to azanigerone A. Alternatively, the oxidation of aldehyde to carboxylic acid may be catalyzed by the same P450 enzyme azaI via consecutive oxidation or by endogenous alcohol dehydrogenase. The chain is FAD-linked oxidoreductase azaG from Aspergillus niger (strain ATCC 1015 / CBS 113.46 / FGSC A1144 / LSHB Ac4 / NCTC 3858a / NRRL 328 / USDA 3528.7).